A 394-amino-acid polypeptide reads, in one-letter code: DNA primase large subunit PriL (394 aa).

[4Fe-4S] cluster contacts are provided by C231, C340, C351, and C357.

It belongs to the eukaryotic-type primase large subunit family. In terms of assembly, heterodimer of a small subunit (PriS) and a large subunit (PriL). The cofactor is [4Fe-4S] cluster.

Its function is as follows. Regulatory subunit of DNA primase, an RNA polymerase that catalyzes the synthesis of short RNA molecules used as primers for DNA polymerase during DNA replication. Stabilizes and modulates the activity of the small subunit, increasing the rate of DNA synthesis, and conferring RNA synthesis capability. The DNA polymerase activity may enable DNA primase to also catalyze primer extension after primer synthesis. May also play a role in DNA repair. The protein is DNA primase large subunit PriL of Pyrococcus horikoshii (strain ATCC 700860 / DSM 12428 / JCM 9974 / NBRC 100139 / OT-3).